A 303-amino-acid chain; its full sequence is MKNIIFMGTPSYATCILKELIDKGFNVQALFTQSDKPVGRKQILTPSDTKKFVLENNLNIEIFTPKSLKDENIINEIKILKPDFIVVAAYGKILPKEILDIAPCINLHASLLPKYRGASPIQSAILNGDKISGVCTMLMEEGLDSGAILESTECDIEGKNSAEVFIMFSNLAAKLTISTLLNFEKIIPKKQDESLVIHCKKIKKEDGLITLDNASEIYQKFLAFYPWPGIFFENGMKFLDIELIDSEKTQKSGVILQVEKESFLLSCKKGILKIKTLQESGKKVLDAKTYLNGKRLKLGDSLF.

110–113 is a (6S)-5,6,7,8-tetrahydrofolate binding site; sequence SLLP.

Belongs to the Fmt family.

It carries out the reaction L-methionyl-tRNA(fMet) + (6R)-10-formyltetrahydrofolate = N-formyl-L-methionyl-tRNA(fMet) + (6S)-5,6,7,8-tetrahydrofolate + H(+). Attaches a formyl group to the free amino group of methionyl-tRNA(fMet). The formyl group appears to play a dual role in the initiator identity of N-formylmethionyl-tRNA by promoting its recognition by IF2 and preventing the misappropriation of this tRNA by the elongation apparatus. The polypeptide is Methionyl-tRNA formyltransferase (Campylobacter lari (strain RM2100 / D67 / ATCC BAA-1060)).